The sequence spans 353 residues: S-adenosylmethionine:tRNA ribosyltransferase-isomerase (353 aa).

It belongs to the QueA family. In terms of assembly, monomer.

It is found in the cytoplasm. It catalyses the reaction 7-aminomethyl-7-carbaguanosine(34) in tRNA + S-adenosyl-L-methionine = epoxyqueuosine(34) in tRNA + adenine + L-methionine + 2 H(+). Its pathway is tRNA modification; tRNA-queuosine biosynthesis. In terms of biological role, transfers and isomerizes the ribose moiety from AdoMet to the 7-aminomethyl group of 7-deazaguanine (preQ1-tRNA) to give epoxyqueuosine (oQ-tRNA). This chain is S-adenosylmethionine:tRNA ribosyltransferase-isomerase, found in Burkholderia vietnamiensis (strain G4 / LMG 22486) (Burkholderia cepacia (strain R1808)).